The primary structure comprises 227 residues: UMP-CMP kinase (227 aa).

35 to 40 serves as a coordination point for ATP; it reads GAGKGT. Residues 55-85 form an NMP region; sequence SAGDLLRAEQHREGSEYGQLIQTCIKEGSIV. Residues R61, 83 to 85, 122 to 125, and Q129 each bind a ribonucleoside 5'-phosphate; these read SIV and GFPR. The tract at residues 159-169 is LID; the sequence is ERGKTSGREDD. An ATP-binding site is contributed by R160. A ribonucleoside 5'-phosphate-binding residues include R166 and R177. Position 205 (V205) interacts with ATP.

This sequence belongs to the adenylate kinase family. UMP-CMP kinase subfamily. As to quaternary structure, monomer. Mg(2+) is required as a cofactor.

Its subcellular location is the cytoplasm. It is found in the nucleus. It carries out the reaction UMP + ATP = UDP + ADP. Catalyzes the phosphorylation of pyrimidine nucleoside monophosphates at the expense of ATP. Plays an important role in de novo pyrimidine nucleotide biosynthesis. Has preference for UMP and CMP as phosphate acceptors, but can also use AMP and dCMP to a lesser extent. May play a role during the formation of basidiospores in the gill tissue. The chain is UMP-CMP kinase (uck1) from Lentinula edodes (Shiitake mushroom).